We begin with the raw amino-acid sequence, 293 residues long: Coatomer subunit epsilon-2 (293 aa).

The protein belongs to the COPE family. As to quaternary structure, oligomeric complex that consists of at least the alpha, beta, beta', gamma, delta, epsilon and zeta subunits.

The protein resides in the cytoplasm. It is found in the golgi apparatus membrane. It localises to the cytoplasmic vesicle. The protein localises to the COPI-coated vesicle membrane. The coatomer is a cytosolic protein complex that binds to dilysine motifs and reversibly associates with Golgi non-clathrin-coated vesicles, which further mediate biosynthetic protein transport from the ER, via the Golgi up to the trans Golgi network. The coatomer complex is required for budding from Golgi membranes, and is essential for the retrograde Golgi-to-ER transport of dilysine-tagged proteins. In Arabidopsis thaliana (Mouse-ear cress), this protein is Coatomer subunit epsilon-2.